The sequence spans 392 residues: Bifunctional enzyme Fae/Hps (392 aa).

The interval 1–161 (MFLVGEALIG…YEKERSVHPV (161 aa)) is formaldehyde-activating enzyme. Catalysis depends on histidine 17, which acts as the Proton donor. Residues aspartate 19, leucine 48, lysine 66, threonine 68, and glutamine 83 each contribute to the substrate site. The 3-hexulose-6-phosphate synthase stretch occupies residues 162 to 392 (MGYRVMRLWD…IDQYRIMTDF (231 aa)).

This sequence in the N-terminal section; belongs to the formaldehyde-activating enzyme family. It in the C-terminal section; belongs to the HPS/KGPDC family. HPS subfamily.

It carries out the reaction 5,6,7,8-tetrahydromethanopterin + formaldehyde = 5,10-methylenetetrahydromethanopterin + H2O. It catalyses the reaction D-ribulose 5-phosphate + formaldehyde = D-arabino-hex-3-ulose 6-phosphate. It participates in carbohydrate biosynthesis; D-ribose 5-phosphate biosynthesis. Catalyzes the condensation of formaldehyde with tetrahydromethanopterin (H(4)MPT) to 5,10-methylenetetrahydromethanopterin. In terms of biological role, catalyzes the reversible formation of ribulose-5-phosphate and formaldehyde from 3-hexulose-6-phosphate. The sequence is that of Bifunctional enzyme Fae/Hps from Methanothrix thermoacetophila (strain DSM 6194 / JCM 14653 / NBRC 101360 / PT) (Methanosaeta thermophila).